Reading from the N-terminus, the 400-residue chain is Enoyl-[acyl-carrier-protein] reductase [NADH] (400 aa).

NAD(+) contacts are provided by residues 48–53 (GSSSGY), 74–75 (FE), 111–112 (DA), and 139–140 (LA). Tyr225 provides a ligand contact to substrate. The active-site Proton donor is Tyr235. NAD(+)-binding positions include Lys244 and 273–275 (VVT).

It belongs to the TER reductase family. As to quaternary structure, monomer.

It carries out the reaction a 2,3-saturated acyl-[ACP] + NAD(+) = a (2E)-enoyl-[ACP] + NADH + H(+). Its pathway is lipid metabolism; fatty acid biosynthesis. Functionally, involved in the final reduction of the elongation cycle of fatty acid synthesis (FAS II). Catalyzes the reduction of a carbon-carbon double bond in an enoyl moiety that is covalently linked to an acyl carrier protein (ACP). This chain is Enoyl-[acyl-carrier-protein] reductase [NADH], found in Shewanella woodyi (strain ATCC 51908 / MS32).